A 246-amino-acid polypeptide reads, in one-letter code: Complement C1q tumor necrosis factor-related protein 3 (246 aa).

A signal peptide spans 1-22 (MLGRQRIWWHLLPLLFLPFCLC). The Collagen-like domain occupies 51–113 (GYQGPPGPPG…KGEKGYPGVP (63 aa)). The interval 53–112 (QGPPGPPGPPGIPGNHGNNGNNGATGHEGAKGEKGDKGDLGPRGERGQHGPKGEKGYPGV) is disordered. Residues 55–64 (PPGPPGPPGI) show a composition bias toward pro residues. Residues 65-74 (PGNHGNNGNN) show a composition bias toward low complexity. Residues 80–107 (EGAKGEKGDKGDLGPRGERGQHGPKGEK) are compositionally biased toward basic and acidic residues. A C1q domain is found at 113–246 (PPELQIAFMA…FAGFLLFETK (134 aa)).

It localises to the secreted. This is Complement C1q tumor necrosis factor-related protein 3 (C1qtnf3) from Mus musculus (Mouse).